The sequence spans 476 residues: Ribulose bisphosphate carboxylase large chain (476 aa).

2 residues coordinate substrate: Asn-124 and Thr-174. The active-site Proton acceptor is Lys-176. A substrate-binding site is contributed by Lys-178. Residues Lys-202, Asp-204, and Glu-205 each coordinate Mg(2+). Lys-202 bears the N6-carboxylysine mark. His-295 functions as the Proton acceptor in the catalytic mechanism. Substrate-binding residues include Arg-296, His-328, and Ser-380.

This sequence belongs to the RuBisCO large chain family. Type I subfamily. As to quaternary structure, heterohexadecamer of 8 large chains and 8 small chains; disulfide-linked. The disulfide link is formed within the large subunit homodimers. Forms complexes of many stoichiometries with Raf1 with and without RbcS. RuBisCO interacts with the C-terminus of CcmM. Mg(2+) is required as a cofactor. In terms of processing, the disulfide bond which can form in the large chain dimeric partners within the hexadecamer appears to be associated with oxidative stress and protein turnover.

It localises to the carboxysome. It catalyses the reaction 2 (2R)-3-phosphoglycerate + 2 H(+) = D-ribulose 1,5-bisphosphate + CO2 + H2O. It carries out the reaction D-ribulose 1,5-bisphosphate + O2 = 2-phosphoglycolate + (2R)-3-phosphoglycerate + 2 H(+). RuBisCO catalyzes two reactions: the carboxylation of D-ribulose 1,5-bisphosphate, the primary event in carbon dioxide fixation, as well as the oxidative fragmentation of the pentose substrate in the photorespiration process. Both reactions occur simultaneously and in competition at the same active site. The protein is Ribulose bisphosphate carboxylase large chain of Nostoc sp. (strain PCC 7120 / SAG 25.82 / UTEX 2576).